Here is a 258-residue protein sequence, read N- to C-terminus: Aspartate/glutamate leucyltransferase (258 aa).

It belongs to the R-transferase family. Bpt subfamily.

Its subcellular location is the cytoplasm. It catalyses the reaction N-terminal L-glutamyl-[protein] + L-leucyl-tRNA(Leu) = N-terminal L-leucyl-L-glutamyl-[protein] + tRNA(Leu) + H(+). The catalysed reaction is N-terminal L-aspartyl-[protein] + L-leucyl-tRNA(Leu) = N-terminal L-leucyl-L-aspartyl-[protein] + tRNA(Leu) + H(+). Functions in the N-end rule pathway of protein degradation where it conjugates Leu from its aminoacyl-tRNA to the N-termini of proteins containing an N-terminal aspartate or glutamate. This chain is Aspartate/glutamate leucyltransferase, found in Rhodopseudomonas palustris (strain ATCC BAA-98 / CGA009).